Consider the following 1082-residue polypeptide: M cell-type agglutination protein mam3 (1082 aa).

Positions 1 to 18 are cleaved as a signal peptide; sequence MSIALAFFILVLLGFSWA. N-linked (GlcNAc...) asparagine glycans are attached at residues asparagine 28, asparagine 56, and asparagine 82. The disordered stretch occupies residues 353–374; sequence TSSSSTDQLTSASPISSSVISP. Residues asparagine 451, asparagine 475, asparagine 495, asparagine 520, asparagine 548, asparagine 588, asparagine 613, and asparagine 638 are each glycosylated (N-linked (GlcNAc...) asparagine). A run of 11 repeats spans residues 646–681, 682–717, 718–753, 754–789, 790–825, 826–861, 862–897, 898–933, 934–969, 970–1005, and 1006–1041. The tract at residues 720 to 1043 is 11 X 36 AA approximate tandem repeats; the sequence is VTETVTSGSI…VLVDIPQQHA (324 aa).

Belongs to the mam3/map4 family.

It localises to the cell surface. Functionally, m cell-type specific protein involved in agglutination during conjugation. The sequence is that of M cell-type agglutination protein mam3 from Schizosaccharomyces pombe (strain 972 / ATCC 24843) (Fission yeast).